A 122-amino-acid chain; its full sequence is Large ribosomal subunit protein uL14 (122 aa).

The protein belongs to the universal ribosomal protein uL14 family. As to quaternary structure, part of the 50S ribosomal subunit. Forms a cluster with proteins L3 and L19. In the 70S ribosome, L14 and L19 interact and together make contacts with the 16S rRNA in bridges B5 and B8.

Its function is as follows. Binds to 23S rRNA. Forms part of two intersubunit bridges in the 70S ribosome. This is Large ribosomal subunit protein uL14 from Cytophaga hutchinsonii (strain ATCC 33406 / DSM 1761 / CIP 103989 / NBRC 15051 / NCIMB 9469 / D465).